Consider the following 106-residue polypeptide: Nucleoid-associated protein Rpal_0620 (106 aa).

The protein belongs to the YbaB/EbfC family. In terms of assembly, homodimer.

The protein localises to the cytoplasm. It localises to the nucleoid. Functionally, binds to DNA and alters its conformation. May be involved in regulation of gene expression, nucleoid organization and DNA protection. This is Nucleoid-associated protein Rpal_0620 from Rhodopseudomonas palustris (strain TIE-1).